Consider the following 302-residue polypeptide: tRNA dimethylallyltransferase (302 aa).

9-16 (GPTGTGKS) is a binding site for ATP. A substrate-binding site is contributed by 11–16 (TGTGKS).

The protein belongs to the IPP transferase family. As to quaternary structure, monomer. It depends on Mg(2+) as a cofactor.

It carries out the reaction adenosine(37) in tRNA + dimethylallyl diphosphate = N(6)-dimethylallyladenosine(37) in tRNA + diphosphate. In terms of biological role, catalyzes the transfer of a dimethylallyl group onto the adenine at position 37 in tRNAs that read codons beginning with uridine, leading to the formation of N6-(dimethylallyl)adenosine (i(6)A). The polypeptide is tRNA dimethylallyltransferase (Mycolicibacterium smegmatis (strain ATCC 700084 / mc(2)155) (Mycobacterium smegmatis)).